Consider the following 191-residue polypeptide: Glutathione-dependent formaldehyde-activating enzyme (191 aa).

The CENP-V/GFA domain occupies 22-169 (FQGGTLECHC…LTELGLPPYD (148 aa)). Cys-29, Cys-31, Cys-50, Cys-52, Cys-55, Cys-97, and Cys-100 together coordinate Zn(2+).

This sequence belongs to the Gfa family. It depends on Zn(2+) as a cofactor.

It carries out the reaction S-(hydroxymethyl)glutathione = glutathione + formaldehyde. Its pathway is one-carbon metabolism; formaldehyde degradation; formate from formaldehyde (glutathione route): step 1/3. In terms of biological role, catalyzes the condensation of formaldehyde and glutathione to S-hydroxymethylglutathione. This chain is Glutathione-dependent formaldehyde-activating enzyme, found in Xanthomonas axonopodis pv. citri (strain 306).